A 500-amino-acid chain; its full sequence is uncharacterized protein (500 aa).

A helical membrane pass occupies residues 27 to 47 (IFALILIVFGFIIAPLLPGIF).

Its subcellular location is the membrane. This is an uncharacterized protein from Borreliella burgdorferi (strain ATCC 35210 / DSM 4680 / CIP 102532 / B31) (Borrelia burgdorferi).